The sequence spans 471 residues: Major facilitator-type transporter psiT1 (471 aa).

The tract at residues 1 to 36 (MNPTTATDAHERTSLLSGRPQSAANSTAPYERQVQP) is disordered. A compositionally biased stretch (polar residues) spans 14–36 (SLLSGRPQSAANSTAPYERQVQP). N-linked (GlcNAc...) asparagine glycosylation is present at asparagine 25. A run of 8 helical transmembrane segments spans residues 44–64 (TPVTVITIITLIYRLATTMVI), 108–128 (AIMVSMTTVIDGLGGILGTGI), 140–160 (PVLMFLLSCTMIDHLAILTVQ), 168–188 (LVTFGLIMIVETIGNENTTVF), 212–232 (GWLVLGGALAYSIGGSITTFL), 237–257 (AVYIVSFSVTGIVLTFTAFVL), 322–342 (LHSFIVTLADAYALPAMLIFF), and 356–376 (VMTTYSVSSVFVLAIALPLFI). An N-linked (GlcNAc...) asparagine glycan is attached at asparagine 384. The helical transmembrane segment at 424–444 (VHITVISWTIESLAYIVLGTV) threads the bilayer.

The protein belongs to the major facilitator superfamily. TCR/Tet family.

Its subcellular location is the membrane. Its function is as follows. Major facilitator-type transporter; part of the gene cluster that mediates the biosynthesis of psilocybin, a psychotropic tryptamine-derived natural product. The polypeptide is Major facilitator-type transporter psiT1 (Psilocybe cyanescens).